We begin with the raw amino-acid sequence, 278 residues long: Bifunctional protein FolD (278 aa).

NADP(+) contacts are provided by residues 162-164 (GAG) and I228.

Belongs to the tetrahydrofolate dehydrogenase/cyclohydrolase family. In terms of assembly, homodimer.

The catalysed reaction is (6R)-5,10-methylene-5,6,7,8-tetrahydrofolate + NADP(+) = (6R)-5,10-methenyltetrahydrofolate + NADPH. It catalyses the reaction (6R)-5,10-methenyltetrahydrofolate + H2O = (6R)-10-formyltetrahydrofolate + H(+). Its pathway is one-carbon metabolism; tetrahydrofolate interconversion. In terms of biological role, catalyzes the oxidation of 5,10-methylenetetrahydrofolate to 5,10-methenyltetrahydrofolate and then the hydrolysis of 5,10-methenyltetrahydrofolate to 10-formyltetrahydrofolate. The chain is Bifunctional protein FolD from Hydrogenobaculum sp. (strain Y04AAS1).